An 872-amino-acid polypeptide reads, in one-letter code: DNA mismatch repair protein MutS (872 aa).

Glycine 632 to serine 639 provides a ligand contact to ATP.

It belongs to the DNA mismatch repair MutS family.

Its function is as follows. This protein is involved in the repair of mismatches in DNA. It is possible that it carries out the mismatch recognition step. This protein has a weak ATPase activity. The protein is DNA mismatch repair protein MutS of Colwellia psychrerythraea (strain 34H / ATCC BAA-681) (Vibrio psychroerythus).